The sequence spans 1386 residues: MFFKRSTNSRKTSANSSSDTSTSSESLLLPLLNNTKAGARSQKGSVHRQSGKKARRKMMENPYVCSLELDELSADDSIIDYSVFSDDSFLLILLLTSKGDVQAYLETSRDTKPRKNVVNIKTACSLNVSPVTVCIGSQAAFAIFGLADGNLLVTPIRLLIDVTWGGSSWATTTVIDLSLPTVDPCLATPTCTKCFVSNFPPCTMAVVANKAGNILLVDLHLRKCVSELKAPQSLHQIDILLDENSIELLVTGFTGAQWIIPIERSGKGFREVLTTCVPSDLTVLEPATMQFFAADSCGVVALDTTESIVEVYNTFHSLAHSSKRTFKVPPETWMVHAGDNMLFTVSNDNEIRSALHFGFMSSRLEYTLVRTSTNWRPLGIVAMPSRPHKLAGIFVVNERGLVRVEQSTALNLTKIASEFFFRLSPLQLNSKSVAQVANACRIDTAEFQSALIPNLLSTRKNRQLTNKELSQIYSIAKAINLSMSDLLKAFENESIGEQLLPEVLNTIQTNPAKHDNLMQRVVEMFVKRSLSAEGNMDKIREYDAELSNFLARHEHLHKGSVDCAKAGMWKCTQTLVRRDVHETKSIDTSTEVLLYIIKNRLQIWNEANSTDRLQIMSLVCHLDWSKLADADGARVCAILSAWQRDISLPSYHEMCLRIAITNSDRFPRPCQILSLVSSIHILSEKKISNHANLPNFLPLAGGNNCGATITEDDRLMIWGNFTNAQQRMEMPQMNAKSKRSDSVTNGAPTLPPPAPKPEQHLPRVLEYPGGRPRAIACGAEHILVLSSSGQLSAWGGNRFGQCGVGHSFRIANLHQVDGDWPAIEKIACGQFHSAFICSDGSLWTFGWGVWGQLGHGGRNNSNQLVPTRVNGLICKVTQIACGRAHTVVLTDTGRVLVCGSGSYGQMGVDDDIKKVFAFTPLPLGPLRVRDIATHYYHSICITEDNRVFEWGRNPQELKMRMFVMKKIRSAQLKNTEDPSSPSPSTNGSTPRVNLNLPAEIPREDLGLREVKHFLDGNIVSVACGLSHSALITSEGTLYTWGKGLDYQLGHGNKNERMEPHQVFEPNGAKWVNVSLGNNHTIASTDDGSVFAWGKNDFGQCGVLTKKNGNSADVTKKFFFQARDGRRFMPNVDESQFVQKPGLIPDVRVRNLNEDGNEGVDKEEIVDRLKASDVNVVQAVSKHLYSPIEGKCNGSIIEDEPRNGKIQKQNKYDGEDGPLCTTTALVHLIAGDVKRAIRMIEWLKTDSSTCEKSLMVLSSLVWEVMANHEDVQSREALSAAFRHVPMSDSMRKGKQIAQLWPAVWNDERVQSSLSIDEKIAMLDGFTSASKPVSCPTIPSSSLEVSSKIRVYAQCAHAEPAAVGSPPECSTCLDEWTEKVRHTLGTQL.

Disordered regions lie at residues 1–25 (MFFKRSTNSRKTSANSSSDTSTSSE), 37–56 (AGARSQKGSVHRQSGKKARR), and 730–760 (MPQMNAKSKRSDSVTNGAPTLPPPAPKPEQH). The segment covering 9–25 (SRKTSANSSSDTSTSSE) has biased composition (low complexity). Positions 45-56 (SVHRQSGKKARR) are enriched in basic residues. RCC1 repeat units follow at residues 737–787 (SKRS…VLSS), 788–838 (SGQL…FICS), 839–891 (DGSL…VLTD), and 893–943 (GRVL…CITE). Positions 972 to 994 (LKNTEDPSSPSPSTNGSTPRVNL) are disordered. RCC1 repeat units follow at residues 1034–1085 (EGTL…ASTD) and 1087–1139 (GSVF…FVQK).

Functionally, could be a guanine-nucleotide releasing factor for glo-1. May play a role in gut granule biogenesis. Regulates axon termination in PLM and ALM neurons. The sequence is that of X-linked retinitis pigmentosa GTPase regulator homolog (glo-4) from Caenorhabditis elegans.